Here is a 447-residue protein sequence, read N- to C-terminus: Selenide, water dikinase 3 (447 aa).

U50 is an active-site residue. Residue U50 is a non-standard amino acid, selenocysteine. Residues K53, 103–105, D123, D146, and 197–200 each bind ATP; these read GMD and GGQT. D105 lines the Mg(2+) pocket. D146 is a Mg(2+) binding site. D301 is a Mg(2+) binding site.

The protein belongs to the selenophosphate synthase 1 family. As to quaternary structure, homodimer. Mg(2+) serves as cofactor. In terms of tissue distribution, in the embryo, expressed in retina, olfactory vesicles, tectum, pronephros ducts and myotomes at 24 hours post-fertilization and in retina, tectum, liver and intestinal bulb 3 days after fertilization.

It catalyses the reaction hydrogenselenide + ATP + H2O = selenophosphate + AMP + phosphate + 2 H(+). Functionally, synthesizes selenophosphate from selenide and ATP. This is Selenide, water dikinase 3 from Danio rerio (Zebrafish).